A 366-amino-acid polypeptide reads, in one-letter code: Galactoside alpha-(1,2)-fucosyltransferase 1 (366 aa).

The Cytoplasmic portion of the chain corresponds to Met-1–His-8. The helical; Signal-anchor for type II membrane protein transmembrane segment at Leu-9–Phe-25 threads the bilayer. Residues Leu-26–Pro-366 lie on the Lumenal side of the membrane. Asn-66, Asn-302, and Asn-328 each carry an N-linked (GlcNAc...) asparagine glycan.

Belongs to the glycosyltransferase 11 family.

It is found in the golgi apparatus. The protein localises to the golgi stack membrane. It catalyses the reaction a beta-D-galactosyl-(1-&gt;4)-N-acetyl-beta-D-glucosaminyl derivative + GDP-beta-L-fucose = an alpha-L-Fuc-(1-&gt;2)-beta-D-Gal-(1-&gt;4)-beta-D-GlcNAc derivative + GDP + H(+). It carries out the reaction a ganglioside GA1 + GDP-beta-L-fucose = a ganglioside Fuc-GA1 + GDP + H(+). The enzyme catalyses a beta-D-Gal-(1-&gt;3)-beta-D-GlcNAc-(1-&gt;3)-beta-D-Gal-(1-&gt;4)-beta-D-Glc-(1&lt;-&gt;1')-Cer(d18:1(4E)) + GDP-beta-L-fucose = alpha-L-fucosyl-(1-&gt;2)- beta-D-galactosyl-(1-&gt;3)-N-acetyl-beta-D-glucosaminyl-(1-&gt;3)-beta-D-galactosyl-(1-&gt;4)-beta-D-glucosyl-(1&lt;-&gt;1')-N-acylsphing-4-enine + GDP + H(+). The catalysed reaction is a neolactoside nLc4Cer(d18:1(4E)) + GDP-beta-L-fucose = a neolactoside IV(2)-alpha-Fuc-nLc4Cer(d18:1(4E)) + GDP + H(+). It catalyses the reaction a ganglioside GM1 + GDP-beta-L-fucose = a ganglioside Fuc-GM1 + GDP + H(+). It carries out the reaction beta-D-galactosyl-(1-&gt;3)-N-acetyl-D-galactosamine + GDP-beta-L-fucose = alpha-L-fucosyl-(1-&gt;2)-beta-D-galactosyl-(1-&gt;3)-N-acetyl-D-galactosamine + GDP + H(+). It participates in protein modification; protein glycosylation. Catalyzes the transfer of L-fucose, from a guanosine diphosphate-beta-L-fucose, to the terminal galactose residue of glycoconjugates through an alpha(1,2) linkage leading to H antigen synthesis that is an intermediate substrate in the synthesis of ABO blood group antigens. H antigen is essential for maturation of the glomerular layer of the main olfactory bulb, in cell migration and early cell-cell contacts during tumor associated angiogenesis. Preferentially fucosylates soluble lactose and to a lesser extent fucosylates glycolipids gangliosides GA1 and GM1a. This is Galactoside alpha-(1,2)-fucosyltransferase 1 from Lagothrix lagotricha (Brown woolly monkey).